The primary structure comprises 999 residues: Golgin subfamily A member 2 (999 aa).

Residues 1 to 11 (MWPPRFPPPRP) are compositionally biased toward pro residues. Disordered regions lie at residues 1 to 80 (MWPP…PAPP) and 244 to 288 (ARQK…YNKD). Residues 1–86 (MWPPRFPPPR…PAPPTAATDT (86 aa)) are interaction with p115/USO1. 2 positions are modified to dimethylated arginine: arginine 18 and arginine 30. The short motif at 26–49 (KKKLREYQQKNSPGVPAGAKKKKK) is the Nuclear localization signal element. 4 positions are modified to phosphoserine: serine 37, serine 66, serine 273, and serine 438. Residues 147–895 (LTSSNMKELE…VLRLVNERNE (749 aa)) are a coiled coil. Residues 271–280 (TLSTVSTQQK) are compositionally biased toward polar residues. Positions 444–468 (SQMEEPPPPEPPAGPSEAEEQLQGE) are disordered. Pro residues predominate over residues 448 to 457 (EPPPPEPPAG). Phosphoserine occurs at positions 697, 934, and 978. The interaction with GORASP1/GRASP65 stretch occupies residues 989-999 (DENDEVKIMVV).

This sequence belongs to the GOLGA2 family. As to quaternary structure, homodimer, may assemble into homohexamers. Homotetramer; forms a parallel homotetramer with a flexible rod-like structure that can give rise to I- and Y-shaped conformations. Interacts with GORASP1/GRASP65. The homooligomer forms a complex with GORASP1 with a 1:1 stoichiometry. Interacts with RAB1B that has been activated by GTP-binding. Interacts with p115/USO1; interaction with p115/USO1 inhibits interaction with STX5 and/or RAB1B. Interacts with STX5. Interacts with ZFPL1. Interacts with AKAP450/AKAP9; leading to recruit AKAP450/AKAP9 to the cis-Golgi. Post-translationally, phosphorylated at Ser-37 by CDK1 at the onset of mitosis, inhibiting the interaction with p115/USO1 and triggering Golgi disassembly. A report however suggests that Golgi disassembly is independent of phosphorylation at Ser-37. Phosphorylated at Ser-37 in prophase as the Golgi complex starts to break down, and remains phosphorylated during further breakdown and partitioning of the Golgi fragments in metaphase and anaphase. In telophase, GM130 is dephosphorylated by PP2A as the Golgi fragments start to reassemble. Cleaved by caspases at the onset of apoptosis. In terms of processing, methylation by PRMT5 is required for Golgi ribbon formation. As to expression, widely expressed. Detected in brain, kidney, lung, liver, spleen, heart, skeletal muscle, thymus and pancreas. Detected in spermatocytes. Present in oocytes during all oocyte meiotic maturation (at protein level).

Its subcellular location is the golgi apparatus. It localises to the cis-Golgi network membrane. The protein resides in the endoplasmic reticulum-Golgi intermediate compartment membrane. It is found in the cytoplasm. The protein localises to the cytoskeleton. Its subcellular location is the spindle pole. Peripheral membrane component of the cis-Golgi stack that acts as a membrane skeleton that maintains the structure of the Golgi apparatus, and as a vesicle thether that facilitates vesicle fusion to the Golgi membrane. Required for normal protein transport from the endoplasmic reticulum to the Golgi apparatus and the cell membrane. Together with p115/USO1 and STX5, involved in vesicle tethering and fusion at the cis-Golgi membrane to maintain the stacked and inter-connected structure of the Golgi apparatus. Plays a central role in mitotic Golgi disassembly: phosphorylation at Ser-37 by CDK1 at the onset of mitosis inhibits the interaction with p115/USO1, preventing tethering of COPI vesicles and thereby inhibiting transport through the Golgi apparatus during mitosis. Also plays a key role in spindle pole assembly and centrosome organization. Promotes the mitotic spindle pole assembly by activating the spindle assembly factor TPX2 to nucleate microtubules around the Golgi and capture them to couple mitotic membranes to the spindle: upon phosphorylation at the onset of mitosis, GOLGA2 interacts with importin-alpha via the nuclear localization signal region, leading to recruit importin-alpha to the Golgi membranes and liberate the spindle assembly factor TPX2 from importin-alpha. TPX2 then activates AURKA kinase and stimulates local microtubule nucleation. Upon filament assembly, nascent microtubules are further captured by GOLGA2, thus linking Golgi membranes to the spindle. Regulates the meiotic spindle pole assembly, probably via the same mechanism. Also regulates the centrosome organization. Also required for the Golgi ribbon formation and glycosylation of membrane and secretory proteins. This is Golgin subfamily A member 2 (Golga2) from Mus musculus (Mouse).